Here is a 350-residue protein sequence, read N- to C-terminus: MLEEALAAIQNARDLEELKALKARYLGKKGLLTQEMKGLSALPLEERRKRGQELNAIKAALEAALEAREKALEEAALKEALERERVDVSLPGASLFSGGLHPITLMERELVEIFRALGYQAVEGPEVESEFFNFDALNIPEHHPARDMWDTFWLTGEGFRLEGPLGEEVEGRLLLRTHTSPMQVRYMVAHTPPFRIVVPGRVFRFEQTDATHEAVFHQLEGLVVGEGIAMAHLKGAIYELAQALFGPDSKVRFQPVYFPFVEPGAQFAVWWPEGGKWLELGGAGMVHPKVFQAVDAYRERLGLPPAYRGVTGFAFGLGVERLAMLRYGIPDIRYFFGGRLKFLEQFKGVL.

Glu-262 is a binding site for Mg(2+).

Belongs to the class-II aminoacyl-tRNA synthetase family. Phe-tRNA synthetase alpha subunit type 1 subfamily. Tetramer of two alpha and two beta subunits. Mg(2+) serves as cofactor.

The protein localises to the cytoplasm. It carries out the reaction tRNA(Phe) + L-phenylalanine + ATP = L-phenylalanyl-tRNA(Phe) + AMP + diphosphate + H(+). This chain is Phenylalanine--tRNA ligase alpha subunit (pheS), found in Thermus thermophilus (strain ATCC 27634 / DSM 579 / HB8).